Consider the following 138-residue polypeptide: Protein transport protein got1 homolog (138 aa).

At 1 to 7 the chain is on the cytoplasmic side; that stretch reads MFTDQQK. A helical transmembrane segment spans residues 8-28; it reads IGAMLSAMGLFFGFLGVLLFL. The Lumenal segment spans residues 29–30; sequence DR. The chain crosses the membrane as a helical span at residues 31 to 51; the sequence is NLLALGNLLLVSGIVLILGLQ. Topologically, residues 52–62 are cytoplasmic; it reads KTTKFFAQKKK. Residues 63 to 82 form a helical membrane-spanning segment; the sequence is IKGTILFFFGIVVLLVTRWT. Residues 83–87 are Lumenal-facing; sequence FVGMV. Residues 88–108 traverse the membrane as a helical segment; it reads IEIFGFVNLFGDAFPIVISIL. Residues 109 to 138 lie on the Cytoplasmic side of the membrane; the sequence is RKLPIIGNILNHPLVNRLLQKADSGNELPF.

The protein belongs to the GOT1 family.

The protein localises to the golgi apparatus membrane. Functionally, may be involved in fusion of ER-derived transport vesicles with the Golgi complex. The sequence is that of Protein transport protein got1 homolog (golt1) from Dictyostelium discoideum (Social amoeba).